Consider the following 2147-residue polypeptide: MEGPSRVYLFGDQTSDIEAGLRRLLQAKNSTIVQSFFQQCFHAIRQEIAKLPPSQRKLFPRFTSIVDLLSKSRESGPSPVLESALTCIYQLGCFIHYYGDLGHGYPTPSNSHLVGLCLGVLSCTAVSCAKNVGELIPAAVEAVVVALRLGICVFRVRELVDSGDSESTCWSALISGISETEASRLIDEYSNKKATPPSSKPYISAVSSNGVTVSAPPTVLDEFIGTCISKNYKPVKAPIHGPYHAPHLYDNKDIERILQQSSALESLTASSPTVPVISSNTGKPINAKSTRDLFKVALEEILLRRLCWDKVTESCTSVCKTGTNHSCKLFPISSSATQSLFTALKKAGVNISLETGVGEIATNPDMRNLTGKAECSKIAIIGMSGRFPDADGTESFWDLLYKGLDVHRKVPADRWDVDAHVDLTGSKRNTSKVPYGCWINEPGLFDPRFFNMSPREALQADPAQRLALLTAYEALEMAGFIPDSSPSTQRDRVGIFYGMTSDDYREINSGQDIDTYFIPGGNRAFTPGRINYYFKFSGPSVSVDTACSSSLAAIHMACNSIWRNDCDAAITGGVNILTNPDNHAGLDRGHFLSTTGNCNTFDDGADGYCRADGVGSIVLKRLEDAEADNDPILAVINGAYTNHSAEAVSITRPHVGAQAFIFNKLLNDANIDPKEVSYVEMHGTGTQAGDAVEMQSVLDVFAPDYRRGPGQSLHIGSAKANIGHGESASGVTALVKVLLMMRENMIPPHCGIKTKINHNFPTDLAKRNVHIAFQPTPWNRPASGKRRSFVNNFSAAGGNTAILLEDAPIPERQGQDPRAFHLVSVSARSQSALKNNIESLVKYIDSQGKSFGVKETEFLPNLAYTTTARRIHHPFRVTAVGANLQSLRDSLHGALHRETYTPVPSTAPGIGFVFTGQGAQYTGMGKELYSTCFQFRTTIEHFDCIARSQGLPSILPLVDGSVPVEDLSPVVVQVGTTCVQMALVNYWTALGVKPAFIIGHSLGDYAALNTAGVLSTSDTIYLCGRRAQLLTKECKIGTHSMLAIKASLAEVKQFLKDELHEVSCVNAPAETVVSGLVADIDDLAQKCSTEGLKSTKLRVPYAFHSSQVDPILDTFEEIAQGVTFHKPTTPFVSALFGEVITDANWECLGPKYLRDHCRKTVNFLGGVEATRHAKLTNDKTLWVEIGSHTICSGMIKATLGPQVTTVASLRREEDTWKVLSNSLSSLHLAGIDINWKQYHQDFSSSHQVLRLPSYKWDLKNYWIPYTNNFCLHKGAPVAAVAAGPQHEFLTTAAQKVIETRSDGATATVVVENDIADPDLNRVIQGHKVNGAALCPSSLYADISQTLAEYLIKKYKPEYDGLGLDVCEVTVPRPLIAKSGQQLFRVSATADWAEKKVTLQVYSVTAEGKKTADHATCTVRFFDCAAAEAEWKRVSYLVKRSIDRLHDIAENGDAHRLGRGMVYKLFAALVDYDDNFKSIREVILDSEQHEATARVKFQAPQGNFHRNPFWIDSFGHLSGFIMNASDATDSKNQVFVNHGWDSMRCLKKFSPDVTYRTYVRMQPWKDSIWAGDVYVFDGDDIVAVYGAVKFQGLSRKILDTVLPPVGASKGPARPAASAQKAAPAATSKSRASAPAPAKAVAKPSAPSLVKRALTILAEEVGLSESELTDELVFADYGVDSLLSLTVTGRYREELDIDLESSVFIDQPTVKDFKQFLAPMSQGEASDGSTSDPESSSSFNGGSSTDESSAGSPVSSPPNEKIEQHATMKEIRAILADEIGVSEEELKDDENLGEMGMDSLLSLTVLGRIRETLDLDLPGEFFIENQTLNDVEDALGLKPKVAPAPAPTPAPAPVSAPILSEPVPNPKSTIMTRASPHPRSTSILLQGNPKTATKTLFLFPDGSGSATSYATIPGVSPDVCVYGLNCPYMKTPEKLKYPLAEMTFPYLAEIRRRQPKGPYNFGGWSAGGICAYDAARYLILEEGERVDRLLLLDSPFPIGLEKLPTRLYGFINSKGLFGEGNKAPPSWLLPHFLAFIDSLDTYRAVPLPFDDPKWANKMPKTFLVWAKDGICNKPDDPWPEPDPDGKPDTREMVWLLKNRTDMGPNKWDTLVGPANVGGISVIEGANHFTMTLGPKAKELGSFIGNAMAN.

Positions 8-244 (YLFGDQTSDI…VKAPIHGPYH (237 aa)) are N-terminal acylcarrier protein transacylase domain (SAT). The region spanning 375–806 (CSKIAIIGMS…GGNTAILLED (432 aa)) is the Ketosynthase family 3 (KS3) domain. Catalysis depends on for beta-ketoacyl synthase activity residues Cys-547, His-682, and His-724. Residues 912-1232 (FVFTGQGAQY…LSSLHLAGID (321 aa)) form a malonyl-CoA:ACP transacylase (MAT) domain region. The active-site For acyl/malonyl transferase activity is Ser-1001. The segment at 1286–1425 (HEFLTTAAQK…CTVRFFDCAA (140 aa)) is N-terminal hotdog fold. One can recognise a PKS/mFAS DH domain in the interval 1286–1598 (HEFLTTAAQK…FQGLSRKILD (313 aa)). Positions 1290-1603 (TTAAQKVIET…RKILDTVLPP (314 aa)) are product template (PT) domain. The active-site Proton acceptor; for dehydratase activity is the His-1326. The segment at 1452 to 1598 (DAHRLGRGMV…FQGLSRKILD (147 aa)) is C-terminal hotdog fold. The Proton donor; for dehydratase activity role is filled by Asp-1511. The interval 1608–1637 (KGPARPAASAQKAAPAATSKSRASAPAPAK) is disordered. Residues 1610–1637 (PARPAASAQKAAPAATSKSRASAPAPAK) show a composition bias toward low complexity. The Carrier 1 domain occupies 1642–1719 (PSAPSLVKRA…DFKQFLAPMS (78 aa)). The residue at position 1679 (Ser-1679) is an O-(pantetheine 4'-phosphoryl)serine. Positions 1719–1759 (SQGEASDGSTSDPESSSSFNGGSSTDESSAGSPVSSPPNEK) are disordered. The span at 1724 to 1747 (SDGSTSDPESSSSFNGGSSTDESS) shows a compositional bias: low complexity. In terms of domain architecture, Carrier 2 spans 1760–1837 (IEQHATMKEI…DVEDALGLKP (78 aa)). An O-(pantetheine 4'-phosphoryl)serine modification is found at Ser-1797. Residues 1873–2145 (SPHPRSTSIL…ELGSFIGNAM (273 aa)) form a claisen cyclase domain region. Residue Ser-1963 is the For Claisen cyclase activity of the active site.

It carries out the reaction 6 malonyl-CoA + acetyl-CoA + 6 H(+) = naphtopyrone YWA1 + 6 CO2 + 7 CoA + H2O. It functions in the pathway secondary metabolite biosynthesis. Non-reducing polyketide synthase involved in the biosynthesis of bifonsecin B, a dimeric gamma-naphthopyrone. The first step in the biosynthesis of bifonsecin B is the production of gamma-naphthopyrone precursor YWA1 by the non-reducing polyketide synthase albA, via condensation of one acetyl-CoA starter unit with 6 malonyl-CoA units. YWA1 is then methylated by bfoE at position C-6 to yield foncesin which is further methylated at position C-8 by bfoD to produce fonsecin B. A key enzyme in the biosynthetic pathway is the cytochrome P450 monooxygenase bfoB which catalyzes the oxidative dimerization of fonsecin B to bifonsecin B. Bfob also catalyzes the oxidative dimerization of rubrofusarin B into nigerone. The stereoselectivity of bfoB is influenced by the two natural monomeric substrates; homodimerization of fonsecin B yields a stereochemically pure biaryl, M-foncerine B, while rubrofusarin B yields a mixture of enantiomers M- and P-nigerone. The protein is Non-reducing polyketide synthase albA of Aspergillus brasiliensis (strain CBS 101740 / IMI 381727 / IBT 21946).